The primary structure comprises 245 residues: 5-oxoprolinase subunit A (245 aa).

Belongs to the LamB/PxpA family. In terms of assembly, forms a complex composed of PxpA, PxpB and PxpC.

It carries out the reaction 5-oxo-L-proline + ATP + 2 H2O = L-glutamate + ADP + phosphate + H(+). In terms of biological role, catalyzes the cleavage of 5-oxoproline to form L-glutamate coupled to the hydrolysis of ATP to ADP and inorganic phosphate. This chain is 5-oxoprolinase subunit A, found in Erwinia tasmaniensis (strain DSM 17950 / CFBP 7177 / CIP 109463 / NCPPB 4357 / Et1/99).